The following is a 172-amino-acid chain: MAAMASFGALALLLLSGLSCCSEACLEPQITPSYYTTSDAVISTETVFIVEISLTCKNRVQNMALYADVSGKQFPVTRGQDVGRYQVSWSLEHKSAHAGTYEVRFFDEESYSLLRKAQRNNEDVSIIPPLFTVSVDHRGTWNGPWVSTEVLAAVIGIVIYYLAFSAKSHIQA.

The N-terminal stretch at 1-23 (MAAMASFGALALLLLSGLSCCSE) is a signal peptide. The Lumenal portion of the chain corresponds to 24–143 (ACLEPQITPS…SVDHRGTWNG (120 aa)). Cys25 and Cys56 are disulfide-bonded. Residue Lys72 forms a Glycyl lysine isopeptide (Lys-Gly) (interchain with G-Cter in ubiquitin) linkage. The chain crosses the membrane as a helical span at residues 144-164 (PWVSTEVLAAVIGIVIYYLAF). At 165–172 (SAKSHIQA) the chain is on the cytoplasmic side.

The protein belongs to the TRAP-delta family. In terms of assembly, heterotetramer of TRAP-alpha, TRAP-beta, TRAP-delta and TRAP-gamma.

The protein localises to the endoplasmic reticulum membrane. Functionally, TRAP proteins are part of a complex whose function is to bind calcium to the ER membrane and thereby regulate the retention of ER resident proteins. The protein is Translocon-associated protein subunit delta (Ssr4) of Mus musculus (Mouse).